The chain runs to 241 residues: Ubiquinone biosynthesis O-methyltransferase (241 aa).

4 residues coordinate S-adenosyl-L-methionine: Arg46, Gly66, Asp87, and Met131.

Belongs to the methyltransferase superfamily. UbiG/COQ3 family.

It carries out the reaction a 3-demethylubiquinol + S-adenosyl-L-methionine = a ubiquinol + S-adenosyl-L-homocysteine + H(+). It catalyses the reaction a 3-(all-trans-polyprenyl)benzene-1,2-diol + S-adenosyl-L-methionine = a 2-methoxy-6-(all-trans-polyprenyl)phenol + S-adenosyl-L-homocysteine + H(+). It participates in cofactor biosynthesis; ubiquinone biosynthesis. Its function is as follows. O-methyltransferase that catalyzes the 2 O-methylation steps in the ubiquinone biosynthetic pathway. This chain is Ubiquinone biosynthesis O-methyltransferase, found in Bordetella pertussis (strain Tohama I / ATCC BAA-589 / NCTC 13251).